A 109-amino-acid polypeptide reads, in one-letter code: Parvalbumin beta (109 aa).

At Ala2 the chain carries N-acetylalanine. EF-hand domains are found at residues 39-74 and 78-109; these read KSADEVKKAFAIIDQDKSGYIEEEELKLFLQNFKAG and LSDAETKAFLKAGDSDGDGKIGVDEFAAMIKG. Asp52, Asp54, Ser56, Tyr58, Glu60, Glu63, Asp91, Asp93, Asp95, Lys97, and Glu102 together coordinate Ca(2+).

The protein belongs to the parvalbumin family. The N-terminus is blocked.

Its function is as follows. In muscle, parvalbumin is thought to be involved in relaxation after contraction. It binds two calcium ions. The chain is Parvalbumin beta from Scomber scombrus (Atlantic mackerel).